Consider the following 113-residue polypeptide: MHEITLCQSAFEIIDSQAKLNNAQKVKSVWMEISALSCVEVSALEFCFDIVCRDTIAQGCQLHIEVIPAKAWCWDCHQVVTVSTFNAGCPACGSQNLRVENDDAMRIKQIEIE.

Ni(2+) contacts are provided by histidine 2 and glutamate 3. The Zn(2+) site is built by cysteine 73, cysteine 76, cysteine 89, and cysteine 92.

The protein belongs to the HypA/HybF family. HybF subfamily.

Functionally, involved in the maturation of [NiFe] hydrogenases. Required for nickel insertion into the metal center of the hydrogenase. The polypeptide is Hydrogenase maturation factor HybF (Proteus vulgaris).